A 112-amino-acid polypeptide reads, in one-letter code: Cell cycle protein GpsB (112 aa).

Positions 38–72 (IKDYEAFHKEFEQLKQQNARLKRELEEQKLVATQV) form a coiled coil.

The protein belongs to the GpsB family. As to quaternary structure, forms polymers through the coiled coil domains. Interacts with PBP1, MreC and EzrA.

The protein resides in the cytoplasm. Divisome component that associates with the complex late in its assembly, after the Z-ring is formed, and is dependent on DivIC and PBP2B for its recruitment to the divisome. Together with EzrA, is a key component of the system that regulates PBP1 localization during cell cycle progression. Its main role could be the removal of PBP1 from the cell pole after pole maturation is completed. Also contributes to the recruitment of PBP1 to the division complex. Not essential for septum formation. The protein is Cell cycle protein GpsB of Bacillus cereus (strain ZK / E33L).